Consider the following 493-residue polypeptide: N-acetylglucosamine kinase 1 (493 aa).

One can recognise a Hexokinase domain in the interval 27 to 490 (ESSVLSSIVE…SIIGAAIGAA (464 aa)). The tract at residues 79 to 221 (TGDEHGQYLV…GLTLDVQSIL (143 aa)) is hexokinase small subdomain. The segment at 222–479 (NDSLAVYSAG…IKVDLKLIEN (258 aa)) is hexokinase large subdomain.

This sequence belongs to the hexokinase family. As to quaternary structure, interacts with histone deacetylase SIR2 under filamentation-inducing conditions.

The protein resides in the cytoplasm. The protein localises to the nucleus. It localises to the mitochondrion. It catalyses the reaction N-acetyl-D-glucosamine + ATP = N-acetyl-D-glucosamine 6-phosphate + ADP + H(+). It carries out the reaction D-mannose + ATP = D-mannose 6-phosphate + ADP + H(+). The catalysed reaction is D-glucose + ATP = D-glucose 6-phosphate + ADP + H(+). The enzyme catalyses D-glucosamine + ATP = D-glucosamine 6-phosphate + ADP + H(+). It functions in the pathway carbohydrate metabolism; hexose metabolism. Its pathway is carbohydrate degradation; glycolysis; D-glyceraldehyde 3-phosphate and glycerone phosphate from D-glucose: step 1/4. Functionally, component of the N-acetylglucosamine catabolic cascade that phosphorylates N-acetylglucosamine (GlcNAc), and allows the unique ability to utilise GlcNAc as carbon source. Converts GlcNAc to GlcNAc-6-P. Also able to phosphorylate glucose, glucosamine (GlcN), and mannose. Galactose, fructose, N-acetylmannosamine (ManNAc), mannosamine (ManN), galactosamine (GalN), and N-acetylgalactosamine (GalNAc) are not phosphorylated by HXK1. GlcNAc metabolism is closely associated with virulence and morphogenesis, and is involved in the cell wall synthesis. Acts both as a repressor and an activator of genes involved in maintaining cellular homeostasis. Contributes to white-opaque morphological transition and plays a role as a filamentation repressor. This is N-acetylglucosamine kinase 1 from Candida albicans (strain SC5314 / ATCC MYA-2876) (Yeast).